A 657-amino-acid polypeptide reads, in one-letter code: Glycogen debranching enzyme (657 aa).

The Nucleophile role is filled by D336. The active-site Proton donor is E371. A disordered region spans residues 460–479 (ANGEENRDGTNNNYSNNHGK).

Belongs to the glycosyl hydrolase 13 family.

The catalysed reaction is Hydrolysis of (1-&gt;6)-alpha-D-glucosidic linkages to branches with degrees of polymerization of three or four glucose residues in limit dextrin.. It participates in glycan degradation; glycogen degradation. In terms of biological role, removes maltotriose and maltotetraose chains that are attached by 1,6-alpha-linkage to the limit dextrin main chain, generating a debranched limit dextrin. The polypeptide is Glycogen debranching enzyme (Escherichia coli O1:K1 / APEC).